The primary structure comprises 249 residues: ATP synthase subunit a 1 (249 aa).

6 helical membrane passes run 26–46, 84–104, 114–134, 143–163, 193–213, and 216–236; these read FTNVSAFMVATVVVASGFLYL, FFPFVFSLFMFVLVANFLGLF, IIVTFALAVLVIGTVIVYGFF, LFVPSGVPGIIVPLVVAIEII, FVVSLAALGPIGIGGAVLPLI, and VAITALEFLVAFLQAYVFTVL.

This sequence belongs to the ATPase A chain family. In terms of assembly, F-type ATPases have 2 components, CF(1) - the catalytic core - and CF(0) - the membrane proton channel. CF(1) has five subunits: alpha(3), beta(3), gamma(1), delta(1), epsilon(1). CF(0) has three main subunits: a(1), b(2) and c(9-12). The alpha and beta chains form an alternating ring which encloses part of the gamma chain. CF(1) is attached to CF(0) by a central stalk formed by the gamma and epsilon chains, while a peripheral stalk is formed by the delta and b chains.

It is found in the cell inner membrane. Functionally, key component of the proton channel; it plays a direct role in the translocation of protons across the membrane. The sequence is that of ATP synthase subunit a 1 from Brucella anthropi (strain ATCC 49188 / DSM 6882 / CCUG 24695 / JCM 21032 / LMG 3331 / NBRC 15819 / NCTC 12168 / Alc 37) (Ochrobactrum anthropi).